Reading from the N-terminus, the 251-residue chain is Derlin-1 (251 aa).

An N-acetylserine modification is found at S2. Topologically, residues 2-15 are cytoplasmic; sequence SDIGDWFRSIPTIT. Residues 16–31 traverse the membrane as a helical segment; that stretch reads RYWFAATVAVPLVGKL. Residues 32 to 69 are Lumenal-facing; that stretch reads GLISPAYFFLWPEAFLYRFQIWRPITATFYFPVGPGTG. Residues 70 to 89 traverse the membrane as a helical segment; that stretch reads FLYLVNLYFLYQYSTRLETG. Over 90–94 the chain is Cytoplasmic; that stretch reads AFDGR. Residues 95-115 traverse the membrane as a helical segment; the sequence is PADYLFMLLFNWICIVITGLA. Over 116–122 the chain is Lumenal; it reads MDMQLLM. Residues 123-137 traverse the membrane as a helical segment; it reads IPLIMSVLYVWAQLN. Residues 138–154 are Cytoplasmic-facing; the sequence is RDMIVSFWFGTRFKACY. The helical transmembrane segment at 155-166 threads the bilayer; that stretch reads LPWVILGFNYII. Over 167–170 the chain is Lumenal; it reads GGSV. A helical membrane pass occupies residues 171 to 189; that stretch reads INELIGNLVGHLYFFLMFR. Over 190–251 the chain is Cytoplasmic; that stretch reads YPMDLGGRNF…WGQGFRLGDQ (62 aa). S201 carries the phosphoserine modification. T202 is subject to Phosphothreonine. S226 bears the Phosphoserine mark. Residues 229–251 are disordered; sequence RAADQNGGGGRHNWGQGFRLGDQ. Residues 241 to 248 carry the SHP-box motif; the sequence is NWGQGFRL.

This sequence belongs to the derlin family. Homotetramer. The four subunits of the tetramer are arranged in a twofold symmetry. Forms homo- and heterooligomers with DERL2 and DERL3; binding to DERL3 is poorer than that between DERL2 and DERL3. Interacts (via SHP-box motif) with VCP. Interacts with AMFR, SELENOS, SEL1L, SELENOK and SYVN1, as well as with SEL1L-SYVN1 and VCP-SELENOS protein complexes; this interaction is weaker than that observed between DERL2 and these complexes. Interacts with NGLY1 and YOD1. Does not bind to EDEM1. Interacts with DNAJB9. Interacts with RNF103. Interacts with HM13. Interacts with XBP1 isoform 1 (via luminal/ectodomain domain); the interaction obviates the need for ectodomain shedding prior HM13/SPP-mediated XBP1 isoform 1 cleavage. Interacts with the signal recognition particle/SRP and the SRP receptor; in the process of endoplasmic reticulum stress-induced pre-emptive quality control. May interact with UBXN6. Interacts with ZFAND2B; probably through VCP. Interacts with CCDC47. Interacts with C18orf32. May interact with TRAM1. Forms a complex with SVIP and VCP/p97.

It localises to the endoplasmic reticulum membrane. In terms of biological role, functional component of endoplasmic reticulum-associated degradation (ERAD) for misfolded lumenal proteins. Forms homotetramers which encircle a large channel traversing the endoplasmic reticulum (ER) membrane. This allows the retrotranslocation of misfolded proteins from the ER into the cytosol where they are ubiquitinated and degraded by the proteasome. The channel has a lateral gate within the membrane which provides direct access to membrane proteins with no need to reenter the ER lumen first. May mediate the interaction between VCP and the misfolded protein. Also involved in endoplasmic reticulum stress-induced pre-emptive quality control, a mechanism that selectively attenuates the translocation of newly synthesized proteins into the endoplasmic reticulum and reroutes them to the cytosol for proteasomal degradation. By controlling the steady-state expression of the IGF1R receptor, indirectly regulates the insulin-like growth factor receptor signaling pathway. The polypeptide is Derlin-1 (Bos taurus (Bovine)).